Consider the following 238-residue polypeptide: Adapter protein MecA (238 aa).

The segment at 108-133 (EDENEESVQGNQQQRRSHASDHSKRA) is disordered.

This sequence belongs to the MecA family. As to quaternary structure, homodimer.

In terms of biological role, enables the recognition and targeting of unfolded and aggregated proteins to the ClpC protease or to other proteins involved in proteolysis. This is Adapter protein MecA from Staphylococcus carnosus (strain TM300).